The sequence spans 409 residues: Argininosuccinate synthase (409 aa).

Residues 15–23 (AYSGGLDTS) and alanine 42 each bind ATP. 2 residues coordinate L-citrulline: tyrosine 93 and serine 98. ATP is bound at residue glycine 123. Positions 125, 129, and 130 each coordinate L-aspartate. Asparagine 129 contributes to the L-citrulline binding site. The L-citrulline site is built by arginine 133, serine 182, serine 191, glutamate 267, and tyrosine 279.

This sequence belongs to the argininosuccinate synthase family. Type 1 subfamily. As to quaternary structure, homotetramer.

The protein localises to the cytoplasm. It catalyses the reaction L-citrulline + L-aspartate + ATP = 2-(N(omega)-L-arginino)succinate + AMP + diphosphate + H(+). It participates in amino-acid biosynthesis; L-arginine biosynthesis; L-arginine from L-ornithine and carbamoyl phosphate: step 2/3. In Desulfitobacterium hafniense (strain Y51), this protein is Argininosuccinate synthase.